The sequence spans 351 residues: Peptide chain release factor 1 (351 aa).

Residue Gln229 is modified to N5-methylglutamine.

The protein belongs to the prokaryotic/mitochondrial release factor family. Post-translationally, methylated by PrmC. Methylation increases the termination efficiency of RF1.

The protein localises to the cytoplasm. Functionally, peptide chain release factor 1 directs the termination of translation in response to the peptide chain termination codons UAG and UAA. The sequence is that of Peptide chain release factor 1 from Cereibacter sphaeroides (strain ATCC 17029 / ATH 2.4.9) (Rhodobacter sphaeroides).